We begin with the raw amino-acid sequence, 246 residues long: MDNQQLPYAGQPAAAGAGAPVPGVPGAGGPPAVPHHHLLQQQQAQLQAFWAYQRQEAERASASDFKNHQLPLARIKKIMKADEDVRMISAEAPVLFAKACELFILELTIRSWLHAEENKRRTLQRNDVAAAIARTDVFDFLVDIVPREEAKEEPGSALGFAAGGPAGAVGAAGPAAGLPYYYPPMGQPAPMMPAWHVPAWDPAWQQGAAPDVDQGAAGSFSEEGQQGFAGHGGAAASFPPAPPSSE.

Disordered regions lie at residues 1–35 (MDNQ…AVPH) and 205–246 (QQGA…PSSE). Residues 9 to 21 (AGQPAAAGAGAPV) show a composition bias toward low complexity.

This sequence belongs to the NFYC/HAP5 subunit family. In terms of assembly, heterotrimeric transcription factor composed of three components, NF-YA, NF-YB and NF-YC. NF-YB and NF-YC must interact and dimerize for NF-YA association and DNA binding. Interacts with NFYB8, NFYB10 and HD5/NFYB11.

Its subcellular location is the nucleus. The protein resides in the cytoplasm. In terms of biological role, probable transcription factor involved in the regulation of flowering time under long day (LD) conditions. Functions as a repressor of flowering, independently of HD1 and GHD7. Controls flowering time by negatively regulating the expression of EHD1 and HD3A. Component of the NF-Y/HAP transcription factor complex. The protein is Nuclear transcription factor Y subunit C-2 of Oryza sativa subsp. japonica (Rice).